Consider the following 233-residue polypeptide: Chalcone--flavanone isomerase (233 aa).

The substrate site is built by Thr47, Asn113, and Ser192.

This sequence belongs to the chalcone isomerase family.

The catalysed reaction is a chalcone = a flavanone.. It participates in secondary metabolite biosynthesis; flavonoid biosynthesis. Functionally, catalyzes the intramolecular cyclization of bicyclic chalcones into tricyclic (S)-flavanones. Responsible for the isomerization of 4,2',4',6'-tetrahydroxychalcone (also termed chalcone) into naringenin. The sequence is that of Chalcone--flavanone isomerase (CHI) from Oryza sativa subsp. japonica (Rice).